Reading from the N-terminus, the 140-residue chain is Ribosome maturation factor RimP (140 aa).

Belongs to the RimP family.

The protein localises to the cytoplasm. Functionally, required for maturation of 30S ribosomal subunits. This is Ribosome maturation factor RimP from Campylobacter lari (strain RM2100 / D67 / ATCC BAA-1060).